Consider the following 335-residue polypeptide: MKNELEKVMAGRDMTENEMNMLANSIIQGELSDVQIASFLVALKMKGESASELTGLARALQKAAISIPTNLTNAMDNCGTGGDRSFSFNISTTAAFVLAAGGVNMAKHGNRSITSKSGSADVLEALGINLYLPAEKLAQVFDKVGLVFLFAQNLHPAMKYFTPVRRQLEIPTIMNLTGPLINPIPLDTQLLGTSRPDLLELTANVLKGLGRKRALVITGEGGMDEATPFGLNHYALLENGEVTLHKFRAADVGMSEVALNDIRGGEAPENAEILKNVLENCSSAFLETTVLNAGLGFYANGKVDSIKSGIELAREVIAQGAALEKLHELQAEQIG.

Residues Gly79, 82 to 83 (GD), Ser87, 89 to 92 (NIST), 107 to 115 (KHGNRSITS), and Ser119 each bind 5-phospho-alpha-D-ribose 1-diphosphate. Residue Gly79 participates in anthranilate binding. Residue Ser91 coordinates Mg(2+). Asn110 contacts anthranilate. Position 165 (Arg165) interacts with anthranilate. Residues Asp224 and Glu225 each coordinate Mg(2+).

This sequence belongs to the anthranilate phosphoribosyltransferase family. In terms of assembly, homodimer. Requires Mg(2+) as cofactor.

The enzyme catalyses N-(5-phospho-beta-D-ribosyl)anthranilate + diphosphate = 5-phospho-alpha-D-ribose 1-diphosphate + anthranilate. It participates in amino-acid biosynthesis; L-tryptophan biosynthesis; L-tryptophan from chorismate: step 2/5. Catalyzes the transfer of the phosphoribosyl group of 5-phosphorylribose-1-pyrophosphate (PRPP) to anthranilate to yield N-(5'-phosphoribosyl)-anthranilate (PRA). The sequence is that of Anthranilate phosphoribosyltransferase from Lactococcus lactis subsp. cremoris (strain MG1363).